We begin with the raw amino-acid sequence, 506 residues long: uncharacterized protein (506 aa).

2 disordered regions span residues 104–144 and 397–456; these read PNSS…ATSS and QQQK…DQLP. The span at 130–144 shows a compositional bias: low complexity; the sequence is ESSPTLSSSSLATSS. Over residues 405–443 the composition is skewed to basic and acidic residues; that stretch reads IKDEDKNEKENKSENEEKEKEKEKEKEKEKEKEKEKEKE. A coiled-coil region spans residues 405–455; the sequence is IKDEDKNEKENKSENEEKEKEKEKEKEKEKEKEKEKEKENEEGEEDNGDQL.

This is an uncharacterized protein from Dictyostelium discoideum (Social amoeba).